The following is a 237-amino-acid chain: D-aminoacyl-tRNA deacylase (237 aa).

The protein belongs to the DtdA deacylase family. Monomer. Zn(2+) is required as a cofactor.

It catalyses the reaction a D-aminoacyl-tRNA + H2O = a tRNA + a D-alpha-amino acid + H(+). It carries out the reaction glycyl-tRNA(Ala) + H2O = tRNA(Ala) + glycine + H(+). D-aminoacyl-tRNA deacylase with broad substrate specificity. By recycling D-aminoacyl-tRNA to D-amino acids and free tRNA molecules, this enzyme counteracts the toxicity associated with the formation of D-aminoacyl-tRNA entities in vivo. This Sulfurisphaera tokodaii (strain DSM 16993 / JCM 10545 / NBRC 100140 / 7) (Sulfolobus tokodaii) protein is D-aminoacyl-tRNA deacylase.